A 452-amino-acid chain; its full sequence is MASGAAQNSSQMACDSEIPGFLDAFLQDFPAPLSLESPLPWKVPGTVLSQEEVEAELIELALGFLGSRNAPPSFAVAVTHEAISQLLQTDLSEFKRLPEQEEEEEEEEEEKALVTLLDAKGLARSFFNCLWKVCSQWQKQVPLTAQAPQWQWLVSIHAIRNTRRKMEDRHVSLPAFNHLFGLSDSVHRAYFAVFDGHGGVDAARYASVHVHTNASHQPELRTNPAAALKEAFRLTDEMFLQKAKRERLQSGTTGVCALIAGAALHVAWLGDSQVILVQQGRVVKLMEPHKPERQDEKARIEALGGFVSLMDCWRVNGTLAVSRAIGDVFQKPYVSGEADAASRELTGSEDYLLLACDGFFDVVPHHEVTGLVHGHLLRHKGNGMRIAEELVAVARDRGSHDNITVMVVFLREPLELLEGGVQGTGDAQADVGSQDLSTGLSELEISNTSQRS.

The PPM-type phosphatase domain maps to Leu153–Leu410. Positions 195, 196, 357, and 401 each coordinate Mn(2+). Ser452 is modified (phosphoserine).

This sequence belongs to the PP2C family. Associates with FEM1B. It depends on Mg(2+) as a cofactor. Mn(2+) is required as a cofactor. In terms of tissue distribution, expressed in the liver.

It catalyses the reaction O-phospho-L-seryl-[protein] + H2O = L-seryl-[protein] + phosphate. It carries out the reaction O-phospho-L-threonyl-[protein] + H2O = L-threonyl-[protein] + phosphate. Dephosphorylates and concomitantly deactivates CaM-kinase II activated upon autophosphorylation, and CaM-kinases IV and I activated upon phosphorylation by CaM-kinase kinase. Promotes apoptosis. The protein is Protein phosphatase 1F (Ppm1f) of Mus musculus (Mouse).